The chain runs to 570 residues: Vacuolar protein sorting-associated protein 45 (570 aa).

S307 and S441 each carry phosphoserine.

The protein belongs to the STXBP/unc-18/SEC1 family. Interacts with ZFYVE20. Interacts with STX6.

The protein localises to the golgi apparatus membrane. It is found in the endosome membrane. In terms of biological role, may play a role in vesicle-mediated protein trafficking from the Golgi stack through the trans-Golgi network. The polypeptide is Vacuolar protein sorting-associated protein 45 (Vps45) (Mus musculus (Mouse)).